Reading from the N-terminus, the 1217-residue chain is ATP-dependent helicase/nuclease subunit A (1217 aa).

The region spanning 10–475 (VIWTDAQWQS…IDLSQNFRSR (466 aa)) is the UvrD-like helicase ATP-binding domain. Residue 31 to 38 (AAAGSGKT) participates in ATP binding. The UvrD-like helicase C-terminal domain occupies 476 to 786 (KEVLSTTNYI…RMMTIHSSKG (311 aa)).

Belongs to the helicase family. AddA subfamily. Heterodimer of AddA and AddB/RexB. Requires Mg(2+) as cofactor.

The enzyme catalyses Couples ATP hydrolysis with the unwinding of duplex DNA by translocating in the 3'-5' direction.. It catalyses the reaction ATP + H2O = ADP + phosphate + H(+). In terms of biological role, the heterodimer acts as both an ATP-dependent DNA helicase and an ATP-dependent, dual-direction single-stranded exonuclease. Recognizes the chi site generating a DNA molecule suitable for the initiation of homologous recombination. The AddA nuclease domain is required for chi fragment generation; this subunit has the helicase and 3' -&gt; 5' nuclease activities. This is ATP-dependent helicase/nuclease subunit A from Staphylococcus aureus (strain Mu3 / ATCC 700698).